We begin with the raw amino-acid sequence, 374 residues long: Pulmonary surfactant-associated protein D (374 aa).

A signal peptide spans 1–19 (MLHFLSMLVLLVQPLGDLG). 2 positions are modified to S-nitrosocysteine: C34 and C39. Positions 40-221 (SPTENGLPGR…RGIKGESGLP (182 aa)) are disordered. The Collagen-like domain occupies 45–221 (GLPGRDGRDG…RGIKGESGLP (177 aa)). The span at 49-64 (RDGRDGREGPRGEKGD) shows a compositional bias: basic and acidic residues. Residue P77 is modified to Hydroxyproline. K86 is modified (5-hydroxylysine). N-linked (GlcNAc...) asparagine glycosylation is present at N89. The residue at position 95 (P95) is a Hydroxyproline. 5-hydroxylysine is present on K98. Residue S109 is modified to Phosphoserine. Composition is skewed to low complexity over residues 137–163 (KGEA…PAGP) and 170–200 (PGEQ…RGPP). Residues P170 and P176 each carry the hydroxyproline modification. A compositionally biased stretch (basic and acidic residues) spans 203 to 215 (KGDRGAPGDRGIK). The stretch at 222–253 (DSAALRQQMEALNGKLQRLEAAFSRYKKAALF) forms a coiled coil. The 116-residue stretch at 259 to 374 (VGDKIFRAAN…GEQRLVICEF (116 aa)) folds into the C-type lectin domain. 2 disulfide bridges follow: C280-C372 and C350-C364.

It belongs to the SFTPD family. In terms of assembly, oligomeric complex of 4 set of homotrimers. Post-translationally, S-nitrosylation at Cys-34 and Cys-39 alters the quaternary structure which results in a pro-inflammatory chemoattractive signaling activity with macrophages.

Its subcellular location is the secreted. The protein localises to the extracellular space. It is found in the extracellular matrix. The protein resides in the surface film. Functionally, contributes to the lung's defense against inhaled microorganisms, organic antigens and toxins. Interacts with compounds such as bacterial lipopolysaccharides, oligosaccharides and fatty acids and modulates leukocyte action in immune response. May participate in the extracellular reorganization or turnover of pulmonary surfactant. Binds strongly maltose residues and to a lesser extent other alpha-glucosyl moieties. This is Pulmonary surfactant-associated protein D (Sftpd) from Rattus norvegicus (Rat).